A 543-amino-acid chain; its full sequence is CTP synthase (543 aa).

The interval 1–267 (MKQTKYIFVT…LSPIAEILDL (267 aa)) is amidoligase domain. Serine 15 is a binding site for CTP. Residue serine 15 coordinates UTP. Residues 16–21 (SLGKGI) and aspartate 73 contribute to the ATP site. The Mg(2+) site is built by aspartate 73 and glutamate 141. Residues 148–150 (DIE), 188–193 (KTKPTQ), and lysine 224 contribute to the CTP site. Residues 188–193 (KTKPTQ) and lysine 224 contribute to the UTP site. The Glutamine amidotransferase type-1 domain maps to 292–543 (KIAFVGKYVD…IKAAINYEDN (252 aa)). Glycine 354 is a binding site for L-glutamine. The active-site Nucleophile; for glutamine hydrolysis is the cysteine 381. L-glutamine is bound by residues 382 to 385 (LGMQ), glutamate 405, and arginine 473. Catalysis depends on residues histidine 516 and glutamate 518.

This sequence belongs to the CTP synthase family. In terms of assembly, homotetramer.

It catalyses the reaction UTP + L-glutamine + ATP + H2O = CTP + L-glutamate + ADP + phosphate + 2 H(+). The enzyme catalyses L-glutamine + H2O = L-glutamate + NH4(+). It carries out the reaction UTP + NH4(+) + ATP = CTP + ADP + phosphate + 2 H(+). The protein operates within pyrimidine metabolism; CTP biosynthesis via de novo pathway; CTP from UDP: step 2/2. With respect to regulation, allosterically activated by GTP, when glutamine is the substrate; GTP has no effect on the reaction when ammonia is the substrate. The allosteric effector GTP functions by stabilizing the protein conformation that binds the tetrahedral intermediate(s) formed during glutamine hydrolysis. Inhibited by the product CTP, via allosteric rather than competitive inhibition. Functionally, catalyzes the ATP-dependent amination of UTP to CTP with either L-glutamine or ammonia as the source of nitrogen. Regulates intracellular CTP levels through interactions with the four ribonucleotide triphosphates. The polypeptide is CTP synthase (Campylobacter jejuni subsp. jejuni serotype O:2 (strain ATCC 700819 / NCTC 11168)).